The chain runs to 434 residues: ATP-dependent RNA helicase RhlB (434 aa).

Residues Lys-9–Ala-37 carry the Q motif motif. Positions Leu-40–Val-219 constitute a Helicase ATP-binding domain. Ala-53–Thr-60 is an ATP binding site. The short motif at Asp-165–Asp-168 is the DEAD box element. Positions Lys-243 to Leu-390 constitute a Helicase C-terminal domain. Residues Leu-390–Pro-434 form a disordered region.

Belongs to the DEAD box helicase family. RhlB subfamily. Component of the RNA degradosome, which is a multiprotein complex involved in RNA processing and mRNA degradation.

It is found in the cytoplasm. The catalysed reaction is ATP + H2O = ADP + phosphate + H(+). In terms of biological role, DEAD-box RNA helicase involved in RNA degradation. Has RNA-dependent ATPase activity and unwinds double-stranded RNA. The sequence is that of ATP-dependent RNA helicase RhlB from Shewanella frigidimarina (strain NCIMB 400).